Here is a 142-residue protein sequence, read N- to C-terminus: Large ribosomal subunit protein uL13 (142 aa).

It belongs to the universal ribosomal protein uL13 family. In terms of assembly, part of the 50S ribosomal subunit.

Its function is as follows. This protein is one of the early assembly proteins of the 50S ribosomal subunit, although it is not seen to bind rRNA by itself. It is important during the early stages of 50S assembly. The chain is Large ribosomal subunit protein uL13 from Pseudomonas aeruginosa (strain LESB58).